The following is a 228-amino-acid chain: HTH-type transcriptional repressor RspR (228 aa).

One can recognise an HTH gntR-type domain in the interval 11-78 (QPVNQQIYRI…PQRGSYVNKI (68 aa)). The H-T-H motif DNA-binding region spans 38–57 (EKEVSVRFNVSRQPVREAFI).

Repressor of the rspAB operon. Acts by binding directly to the upstream region of rspA. This chain is HTH-type transcriptional repressor RspR (rspR), found in Escherichia coli (strain K12).